A 233-amino-acid chain; its full sequence is Probable RNA 2'-phosphotransferase (233 aa).

This sequence belongs to the KptA/TPT1 family.

Removes the 2'-phosphate from RNA via an intermediate in which the phosphate is ADP-ribosylated by NAD followed by a presumed transesterification to release the RNA and generate ADP-ribose 1''-2''-cyclic phosphate (APPR&gt;P). May function as an ADP-ribosylase. The chain is Probable RNA 2'-phosphotransferase from Hyperthermus butylicus (strain DSM 5456 / JCM 9403 / PLM1-5).